A 654-amino-acid chain; its full sequence is Arrestin domain-containing protein C (654 aa).

One can recognise a C2 domain in the interval 1-105 (MTQRSLKINI…AKRNLMDQWL (105 aa)). A coiled-coil region spans residues 616-647 (AKRIFLKIQQIQSERQKQQEQQEQQVVSNLEA).

This sequence belongs to the arrestin family.

This is Arrestin domain-containing protein C (adcC) from Dictyostelium discoideum (Social amoeba).